A 490-amino-acid chain; its full sequence is Cysteine--tRNA ligase (490 aa).

Cysteine 31 is a binding site for Zn(2+). The 'HIGH' region motif lies at 33–43 (PTVYGDAHLGH). The Zn(2+) site is built by cysteine 226, histidine 251, and glutamate 255. Residues 283-287 (KMGKS) carry the 'KMSKS' region motif. Lysine 286 is an ATP binding site.

It belongs to the class-I aminoacyl-tRNA synthetase family. As to quaternary structure, monomer. It depends on Zn(2+) as a cofactor.

Its subcellular location is the cytoplasm. It carries out the reaction tRNA(Cys) + L-cysteine + ATP = L-cysteinyl-tRNA(Cys) + AMP + diphosphate. This Porphyromonas gingivalis (strain ATCC BAA-308 / W83) protein is Cysteine--tRNA ligase.